The following is a 45-amino-acid chain: Protamine Z2 (45 aa).

Basic residues predominate over residues 1-23; sequence MKCGRKRRRRRRHACKRKKRACK. Residues 1–26 are disordered; sequence MKCGRKRRRRRRHACKRKKRACKQRS.

In terms of tissue distribution, testis.

It localises to the nucleus. Its subcellular location is the chromosome. Its function is as follows. Protamines substitute for histones in the chromatin of sperm during the haploid phase of spermatogenesis. They compact sperm DNA into a highly condensed, stable and inactive complex. This Scyliorhinus canicula (Small-spotted catshark) protein is Protamine Z2.